A 330-amino-acid polypeptide reads, in one-letter code: Aspartate--ammonia ligase (330 aa).

This sequence belongs to the class-II aminoacyl-tRNA synthetase family. AsnA subfamily.

It is found in the cytoplasm. It catalyses the reaction L-aspartate + NH4(+) + ATP = L-asparagine + AMP + diphosphate + H(+). It participates in amino-acid biosynthesis; L-asparagine biosynthesis; L-asparagine from L-aspartate (ammonia route): step 1/1. In Streptococcus thermophilus (strain ATCC BAA-250 / LMG 18311), this protein is Aspartate--ammonia ligase.